A 660-amino-acid chain; its full sequence is MKAVIFAYHDMGCQGVQAVLDAGYEIAAIFTHADNPAENTFFGSVSRLAAELGIPVYAPDNVNHPIWVDRIAEFAPDIIFSFYYRNLLSEEILHLAPAGAFNLHGSLLPAYRGRAPLNWVLVNGESETGVTLHRMVKRADAGEIVASQRVAIAQDDVALTLHHKLCQAARQLLNSILPTMKCGDIPSVPQRESDATYYGRRRPEDGLIDWHKPVSTVHNLVRAVAAPWPGAFSYNGSQKFTIWSSRICPDAQGALPGSVISVSPLRVACADGALEIITGQAGDGITVQGSQLAQTLGLVAGARLNRPPATSGKRRIRVLILGVNGFIGNHLTERLLNEENYEVYGMDIGSNAISRFLLHPRFHFVEGDISIHSEWIEYHVKKCDVVLPLVAIATPIEYTRNPLRVFELDFEENLRIIRYCVKYRKRVVFPSTSEVYGMCTDASFDEDKSNLIVGPVNKPRWIYSVSKQLLDRVIWAYGEKEGLRFTLFRPFNWMGPRLDSLNAARIGSSRAITQLILNLVEGTPIKLIDGGQQKRCFTDIRDGIEALFRIIVNEGDRCDGKIINIGNPDNEASIQELATLLLDSFDKHPLRCHFPPFAGFQVVESRSYYGKGYQDVAHRKPSIDNARRCLGWEPSIAMRDTVEETLDFFLRSVDVAERAS.

The formyltransferase ArnAFT stretch occupies residues 1-304 (MKAVIFAYHD…TLGLVAGARL (304 aa)). Catalysis depends on His104, which acts as the Proton donor; for formyltransferase activity. Residues Arg114 and 136 to 140 (VKRAD) contribute to the (6R)-10-formyltetrahydrofolate site. Residues 314-660 (RRIRVLILGV…RSVDVAERAS (347 aa)) are dehydrogenase ArnADH. NAD(+)-binding positions include Asp347 and 368 to 369 (DI). UDP-alpha-D-glucuronate is bound by residues Ala393, Tyr398, and 432–433 (TS). Glu434 serves as the catalytic Proton acceptor; for decarboxylase activity. UDP-alpha-D-glucuronate-binding positions include Arg460, Asn492, 526–535 (KLIDGGQQKR), and Tyr613. The active-site Proton donor; for decarboxylase activity is Arg619.

This sequence in the N-terminal section; belongs to the Fmt family. UDP-L-Ara4N formyltransferase subfamily. The protein in the C-terminal section; belongs to the NAD(P)-dependent epimerase/dehydratase family. UDP-glucuronic acid decarboxylase subfamily. As to quaternary structure, homohexamer, formed by a dimer of trimers.

The catalysed reaction is UDP-alpha-D-glucuronate + NAD(+) = UDP-beta-L-threo-pentopyranos-4-ulose + CO2 + NADH. It carries out the reaction UDP-4-amino-4-deoxy-beta-L-arabinose + (6R)-10-formyltetrahydrofolate = UDP-4-deoxy-4-formamido-beta-L-arabinose + (6S)-5,6,7,8-tetrahydrofolate + H(+). The protein operates within nucleotide-sugar biosynthesis; UDP-4-deoxy-4-formamido-beta-L-arabinose biosynthesis; UDP-4-deoxy-4-formamido-beta-L-arabinose from UDP-alpha-D-glucuronate: step 1/3. Its pathway is nucleotide-sugar biosynthesis; UDP-4-deoxy-4-formamido-beta-L-arabinose biosynthesis; UDP-4-deoxy-4-formamido-beta-L-arabinose from UDP-alpha-D-glucuronate: step 3/3. It participates in bacterial outer membrane biogenesis; lipopolysaccharide biosynthesis. Bifunctional enzyme that catalyzes the oxidative decarboxylation of UDP-glucuronic acid (UDP-GlcUA) to UDP-4-keto-arabinose (UDP-Ara4O) and the addition of a formyl group to UDP-4-amino-4-deoxy-L-arabinose (UDP-L-Ara4N) to form UDP-L-4-formamido-arabinose (UDP-L-Ara4FN). The modified arabinose is attached to lipid A and is required for resistance to polymyxin and cationic antimicrobial peptides. This chain is Bifunctional polymyxin resistance protein ArnA, found in Salmonella dublin (strain CT_02021853).